The primary structure comprises 214 residues: Phosphatidylserine decarboxylase proenzyme (214 aa).

Residue S182 is the Schiff-base intermediate with substrate; via pyruvic acid of the active site. Residue S182 is modified to Pyruvic acid (Ser); by autocatalysis.

Belongs to the phosphatidylserine decarboxylase family. PSD-A subfamily. In terms of assembly, heterodimer of a large membrane-associated beta subunit and a small pyruvoyl-containing alpha subunit. Pyruvate serves as cofactor. In terms of processing, is synthesized initially as an inactive proenzyme. Formation of the active enzyme involves a self-maturation process in which the active site pyruvoyl group is generated from an internal serine residue via an autocatalytic post-translational modification. Two non-identical subunits are generated from the proenzyme in this reaction, and the pyruvate is formed at the N-terminus of the alpha chain, which is derived from the carboxyl end of the proenzyme. The post-translation cleavage follows an unusual pathway, termed non-hydrolytic serinolysis, in which the side chain hydroxyl group of the serine supplies its oxygen atom to form the C-terminus of the beta chain, while the remainder of the serine residue undergoes an oxidative deamination to produce ammonia and the pyruvoyl prosthetic group on the alpha chain.

The protein localises to the cell membrane. The enzyme catalyses a 1,2-diacyl-sn-glycero-3-phospho-L-serine + H(+) = a 1,2-diacyl-sn-glycero-3-phosphoethanolamine + CO2. Its pathway is phospholipid metabolism; phosphatidylethanolamine biosynthesis; phosphatidylethanolamine from CDP-diacylglycerol: step 2/2. Functionally, catalyzes the formation of phosphatidylethanolamine (PtdEtn) from phosphatidylserine (PtdSer). The protein is Phosphatidylserine decarboxylase proenzyme of Burkholderia vietnamiensis (strain G4 / LMG 22486) (Burkholderia cepacia (strain R1808)).